The primary structure comprises 486 residues: UDP-N-acetylmuramoyl-L-alanyl-D-glutamate--2,6-diaminopimelate ligase (486 aa).

Ser31 contributes to the UDP-N-acetyl-alpha-D-muramoyl-L-alanyl-D-glutamate binding site. Position 109 to 115 (109 to 115) interacts with ATP; sequence GTNGKTT. UDP-N-acetyl-alpha-D-muramoyl-L-alanyl-D-glutamate-binding positions include Asn150, 151–152, Ser178, and Arg186; that span reads TT. Lys218 is subject to N6-carboxylysine. Meso-2,6-diaminopimelate-binding positions include Arg381, 405-408, Gly455, and Glu459; that span reads DNPR. Positions 405–408 match the Meso-diaminopimelate recognition motif motif; it reads DNPR.

Belongs to the MurCDEF family. MurE subfamily. Mg(2+) is required as a cofactor. Post-translationally, carboxylation is probably crucial for Mg(2+) binding and, consequently, for the gamma-phosphate positioning of ATP.

It localises to the cytoplasm. It catalyses the reaction UDP-N-acetyl-alpha-D-muramoyl-L-alanyl-D-glutamate + meso-2,6-diaminopimelate + ATP = UDP-N-acetyl-alpha-D-muramoyl-L-alanyl-gamma-D-glutamyl-meso-2,6-diaminopimelate + ADP + phosphate + H(+). It functions in the pathway cell wall biogenesis; peptidoglycan biosynthesis. Catalyzes the addition of meso-diaminopimelic acid to the nucleotide precursor UDP-N-acetylmuramoyl-L-alanyl-D-glutamate (UMAG) in the biosynthesis of bacterial cell-wall peptidoglycan. The sequence is that of UDP-N-acetylmuramoyl-L-alanyl-D-glutamate--2,6-diaminopimelate ligase from Halalkalibacterium halodurans (strain ATCC BAA-125 / DSM 18197 / FERM 7344 / JCM 9153 / C-125) (Bacillus halodurans).